Consider the following 432-residue polypeptide: MGKNVVVLGTQWGDEGKGKIVDLLTERAKYVVRYQGGHNAGHTLVINGEKTVLHLIPSGILRENVISIIANGVVLAPDALMKEMNALESRGIPVRERLLISEACPLILPYHVALDNAREKARGAKAIGTTGRGIGPAYEDKVARRGLRVGDLFDKEAFAVKLKEIIEYHNFQLVNYYKEPAVDYQKTLDEIMAVADILTDMVVDVSDLLYKATQKGELVMFEGAQGTLLDIDHGTYPYVTSSNTTAGGVATGSGLGPCYVDYVLGIIKAYSTRVGAGPFPTELFDETGGYLREKGQEFGATTGRSRRTGWLDIIAIRRAVQINSLSGFCMTKLDVLDGLKEVKICTGYRMPDGSVIETTPLAADDWEGIEPVYETMPGWNESTFGVKEHRKLPQAALNYIKRVEELTGVPVDIISTGPDRSETIILRDPFDA.

GTP is bound by residues 13–19 (GDEGKGK) and 41–43 (GHT). Residue Asp-14 is the Proton acceptor of the active site. Positions 14 and 41 each coordinate Mg(2+). IMP contacts are provided by residues 14 to 17 (DEGK), 39 to 42 (NAGH), Thr-130, Arg-144, Gln-225, Thr-240, and Arg-304. His-42 acts as the Proton donor in catalysis. Residue 300 to 306 (ATTGRSR) coordinates substrate. Residues Arg-306, 332–334 (KLD), and 415–417 (STG) each bind GTP.

The protein belongs to the adenylosuccinate synthetase family. Homodimer. Requires Mg(2+) as cofactor.

Its subcellular location is the cytoplasm. It catalyses the reaction IMP + L-aspartate + GTP = N(6)-(1,2-dicarboxyethyl)-AMP + GDP + phosphate + 2 H(+). The protein operates within purine metabolism; AMP biosynthesis via de novo pathway; AMP from IMP: step 1/2. In terms of biological role, plays an important role in the de novo pathway of purine nucleotide biosynthesis. Catalyzes the first committed step in the biosynthesis of AMP from IMP. The sequence is that of Adenylosuccinate synthetase 2 from Photorhabdus laumondii subsp. laumondii (strain DSM 15139 / CIP 105565 / TT01) (Photorhabdus luminescens subsp. laumondii).